Consider the following 511-residue polypeptide: Sorting nexin MVP1 (511 aa).

The segment at Met-1 to Gly-36 is disordered. A compositionally biased stretch (polar residues) spans Val-25–Gly-36. The PX domain maps to Asp-128–Thr-247. A 1,2-diacyl-sn-glycero-3-phospho-(1D-myo-inositol-3-phosphate) is bound by residues Arg-172, Ser-174, Lys-198, and Arg-213.

It belongs to the sorting nexin family. In terms of assembly, homodimer. Forms an autoinhibited tetramer consisting of 2 homodimers that self-interact, wherein the membrane-interacting BAR surfaces are sequestered and the PX lipid-binding sites are occluded. Interacts with VPS1.

It is found in the cytoplasm. The protein localises to the endosome membrane. Functionally, required for vacuolar protein sorting. Component of the retromer-mediated endosome-to-Golgi retrograde pathway. Required for efficient cargo export from the endosome, promoting VPS1-mediated fission of retromer-coated tubules that bud from the endosome. The sequence is that of Sorting nexin MVP1 (MVP1) from Saccharomyces cerevisiae (strain ATCC 204508 / S288c) (Baker's yeast).